Consider the following 119-residue polypeptide: C-X-C motif chemokine 17 (119 aa).

Residues 1–21 (MKVLISSLLLLLPLMLMSMVS) form the signal peptide. Cystine bridges form between Cys-75/Cys-103 and Cys-77/Cys-110. The interval 81 to 100 (KGNVKKTRHQRHHRKPNKHS) is disordered. The segment covering 82-100 (GNVKKTRHQRHHRKPNKHS) has biased composition (basic residues).

It belongs to the intercrine alpha (chemokine CxC) family. Post-translationally, likely to undergo an endoproteolytic process to form a four-cysteine-containing mature peptide with a canonical CXC chemokine scaffold after secretion. Detected in trachea, stomach, lung and skeletal muscle. Detected in intestine and in normal and asthmatic lung (at protein level). Breast tumors showed 3- to 24-fold up-regulation.

The protein localises to the secreted. Chemokine that acts as a chemoattractant for monocytes, macrophages and dendritic cells. Plays a role in angiogenesis and possibly in the development of tumors. Acts as an anti-inflammatory in the stomach. May play a role in the innate defense against infections. Activates the C-X-C chemokine receptor GPR35 to induce a rapid and transient rise in the level of intracellular calcium ions. In terms of biological role, seems to exhibit much higher chemoattractant potency on monocytes and macrophages than 6-Cys CXCL17. In Homo sapiens (Human), this protein is C-X-C motif chemokine 17 (CXCL17).